Here is an 83-residue protein sequence, read N- to C-terminus: RNA-binding protein Hfq (83 aa).

The region spanning 10–69 (DPFLNALRREHVPVSIYLVNGIKLQGQIESFDQYVVLLRNTVTQMVYKHAISTIVPGRAV) is the Sm domain.

It belongs to the Hfq family. As to quaternary structure, homohexamer.

In terms of biological role, RNA chaperone that binds small regulatory RNA (sRNAs) and mRNAs to facilitate mRNA translational regulation in response to envelope stress, environmental stress and changes in metabolite concentrations. Also binds with high specificity to tRNAs. The protein is RNA-binding protein Hfq of Delftia acidovorans (strain DSM 14801 / SPH-1).